The following is a 569-amino-acid chain: Ribonuclease J (569 aa).

Residues histidine 81, histidine 83, aspartate 85, histidine 86, histidine 150, and aspartate 172 each coordinate Zn(2+). Substrate is bound at residue 373-377 (HASGH). Histidine 399 contributes to the Zn(2+) binding site.

It belongs to the metallo-beta-lactamase superfamily. RNA-metabolizing metallo-beta-lactamase-like family. Bacterial RNase J subfamily. In terms of assembly, homodimer, may be a subunit of the RNA degradosome. It depends on Zn(2+) as a cofactor.

It is found in the cytoplasm. An RNase that has 5'-3' exonuclease and possibly endoonuclease activity. Involved in maturation of rRNA and in some organisms also mRNA maturation and/or decay. In Mycoplasma genitalium (strain ATCC 33530 / DSM 19775 / NCTC 10195 / G37) (Mycoplasmoides genitalium), this protein is Ribonuclease J.